A 312-amino-acid polypeptide reads, in one-letter code: Ribosomal RNA small subunit methyltransferase H (312 aa).

Residues Gly-35 to His-37, Asp-55, Phe-79, Asp-100, and Gln-107 each bind S-adenosyl-L-methionine. The segment at Leu-279–Ala-312 is disordered.

Belongs to the methyltransferase superfamily. RsmH family.

The protein localises to the cytoplasm. The catalysed reaction is cytidine(1402) in 16S rRNA + S-adenosyl-L-methionine = N(4)-methylcytidine(1402) in 16S rRNA + S-adenosyl-L-homocysteine + H(+). Specifically methylates the N4 position of cytidine in position 1402 (C1402) of 16S rRNA. The polypeptide is Ribosomal RNA small subunit methyltransferase H (Aromatoleum aromaticum (strain DSM 19018 / LMG 30748 / EbN1) (Azoarcus sp. (strain EbN1))).